The following is a 176-amino-acid chain: Ribosome rescue factor SmrB (176 aa).

One can recognise a Smr domain in the interval 97–172 (LDMHGMTQQE…GDGALLVLLS (76 aa)).

This sequence belongs to the SmrB family. Associates with collided ribosomes, but not with correctly translating polysomes.

Its function is as follows. Acts as a ribosome collision sensor. Detects stalled/collided disomes (pairs of ribosomes where the leading ribosome is stalled and a second ribosome has collided with it) and endonucleolytically cleaves mRNA at the 5' boundary of the stalled ribosome. Stalled/collided disomes form a new interface (primarily via the 30S subunits) that binds SmrB. Cleaved mRNA becomes available for tmRNA ligation, leading to ribosomal subunit dissociation and rescue of stalled ribosomes. In Vibrio vulnificus (strain YJ016), this protein is Ribosome rescue factor SmrB.